The primary structure comprises 69 residues: DNA gyrase inhibitor YacG (69 aa).

Zn(2+)-binding residues include Cys-13, Cys-16, Cys-32, and Cys-36.

The protein belongs to the DNA gyrase inhibitor YacG family. As to quaternary structure, interacts with GyrB. Zn(2+) is required as a cofactor.

In terms of biological role, inhibits all the catalytic activities of DNA gyrase by preventing its interaction with DNA. Acts by binding directly to the C-terminal domain of GyrB, which probably disrupts DNA binding by the gyrase. This chain is DNA gyrase inhibitor YacG, found in Neisseria meningitidis serogroup B (strain ATCC BAA-335 / MC58).